We begin with the raw amino-acid sequence, 306 residues long: Stimulator of interferon genes protein 5 (306 aa).

A disordered region spans residues 1–50 (MMSNDSQSEKRTAKWTGSGTPIAEGEESSSPSAHQTRQKATAADDDDDQQ). The 2',3'-cGAMP site is built by Y119, R180, and R186.

Belongs to the STING family.

Facilitator of innate immune signaling that acts as a sensor of second messenger signals produced by cyclic GMP-AMP synthase-like receptors (cGLRs) and promotes the production of type I interferon. Innate immune response is triggered in response to nucleotides from viruses and bacteria delivered to the cytoplasm. Acts by binding cyclic dinucleotides: recognizes and binds 2'-3' linked cGAMP (2'-3'-cGAMP), a second messengers produced by cGLRs in response to nucleotides in the cytosol, such as double-stranded RNA (dsRNA). Upon binding to 2'-3'-cGAMP, oligomerizes and promotes the recruitment and subsequent activation of the transcription factor IRF3 to induce expression of type I interferon. The chain is Stimulator of interferon genes protein 5 from Stylophora pistillata (Smooth cauliflower coral).